The following is a 329-amino-acid chain: 4-hydroxythreonine-4-phosphate dehydrogenase (329 aa).

H136 and T137 together coordinate substrate. H166, H211, and H266 together coordinate a divalent metal cation. Residues K274, N283, and R292 each contribute to the substrate site.

It belongs to the PdxA family. In terms of assembly, homodimer. It depends on Zn(2+) as a cofactor. Requires Mg(2+) as cofactor. Co(2+) serves as cofactor.

Its subcellular location is the cytoplasm. The enzyme catalyses 4-(phosphooxy)-L-threonine + NAD(+) = 3-amino-2-oxopropyl phosphate + CO2 + NADH. It functions in the pathway cofactor biosynthesis; pyridoxine 5'-phosphate biosynthesis; pyridoxine 5'-phosphate from D-erythrose 4-phosphate: step 4/5. In terms of biological role, catalyzes the NAD(P)-dependent oxidation of 4-(phosphooxy)-L-threonine (HTP) into 2-amino-3-oxo-4-(phosphooxy)butyric acid which spontaneously decarboxylates to form 3-amino-2-oxopropyl phosphate (AHAP). This is 4-hydroxythreonine-4-phosphate dehydrogenase from Neisseria meningitidis serogroup A / serotype 4A (strain DSM 15465 / Z2491).